The primary structure comprises 168 residues: Putative defense protein 1 (168 aa).

An N-terminal signal peptide occupies residues 1 to 18 (MMFAYIVAVVSALALTSA). Residues 19 to 168 (FPTGAPRSAC…SAPVKILSHH (150 aa)) enclose the Reelin domain. Residues cysteine 28 and cysteine 105 are joined by a disulfide bond.

It belongs to the insect defense protein family. As to expression, very highly expressed in midgut, and highly expressed in fat body, silk gland and epidermis.

It localises to the secreted. Its function is as follows. As this protein is expressed upon bacterial infection, it may have antimicrobial activity. The protein is Putative defense protein 1 of Antheraea mylitta (Tasar silkworm).